We begin with the raw amino-acid sequence, 334 residues long: Malate dehydrogenase, cytoplasmic (334 aa).

Serine 2 carries the post-translational modification N-acetylserine. NAD(+)-binding positions include 11-17 and aspartate 42; that span reads GAAGQIA. Positions 92 and 98 each coordinate substrate. Asparagine 105 serves as a coordination point for NAD(+). Position 110 is an N6-succinyllysine (lysine 110). An NAD(+)-binding site is contributed by glutamine 112. Lysine 118 and lysine 121 each carry N6-acetyllysine. An NAD(+)-binding site is contributed by 129 to 131; sequence VGN. 2 residues coordinate substrate: asparagine 131 and arginine 162. The active-site Proton acceptor is histidine 187. An N6-succinyllysine modification is found at lysine 214. Serine 217 carries the phosphoserine modification. Position 230 is an omega-N-methylarginine (arginine 230). Phosphoserine is present on serine 241. At lysine 298 the chain carries N6-acetyllysine; alternate. Lysine 298 carries the post-translational modification N6-succinyllysine; alternate. Serine 309 bears the Phosphoserine mark. Residue lysine 318 is modified to N6-succinyllysine. Phosphoserine is present on serine 333.

It belongs to the LDH/MDH superfamily. MDH type 2 family. As to quaternary structure, homodimer. Post-translationally, ISGylated. Acetylation at Lys-118 dramatically enhances enzymatic activity and promotes adipogenic differentiation.

The protein localises to the cytoplasm. It localises to the cytosol. It carries out the reaction (S)-malate + NAD(+) = oxaloacetate + NADH + H(+). It catalyses the reaction (2R)-2-hydroxy-3-(4-hydroxyphenyl)propanoate + NAD(+) = 3-(4-hydroxyphenyl)pyruvate + NADH + H(+). The catalysed reaction is (S)-2-hydroxyglutarate + NAD(+) = 2-oxoglutarate + NADH + H(+). In terms of biological role, catalyzes the reduction of aromatic alpha-keto acids in the presence of NADH. Plays essential roles in the malate-aspartate shuttle and the tricarboxylic acid cycle, important in mitochondrial NADH supply for oxidative phosphorylation. Catalyzes the reduction of 2-oxoglutarate to 2-hydroxyglutarate, leading to elevated reactive oxygen species (ROS). In Bos taurus (Bovine), this protein is Malate dehydrogenase, cytoplasmic (MDH1).